The following is a 544-amino-acid chain: Chaperonin GroEL 2 (544 aa).

ATP is bound by residues 30–33 (TLGP), 87–91 (DGTTT), Gly415, 480–482 (NAA), and Asp496.

This sequence belongs to the chaperonin (HSP60) family. As to quaternary structure, forms a cylinder of 14 subunits composed of two heptameric rings stacked back-to-back. Interacts with the co-chaperonin GroES.

Its subcellular location is the cytoplasm. It carries out the reaction ATP + H2O + a folded polypeptide = ADP + phosphate + an unfolded polypeptide.. In terms of biological role, together with its co-chaperonin GroES, plays an essential role in assisting protein folding. The GroEL-GroES system forms a nano-cage that allows encapsulation of the non-native substrate proteins and provides a physical environment optimized to promote and accelerate protein folding. This is Chaperonin GroEL 2 from Albidiferax ferrireducens (strain ATCC BAA-621 / DSM 15236 / T118) (Rhodoferax ferrireducens).